A 659-amino-acid chain; its full sequence is DNA ligase (659 aa).

Residues Asp-31–Asp-35, Ser-80–Leu-81, and Glu-109 contribute to the NAD(+) site. Lys-111 acts as the N6-AMP-lysine intermediate in catalysis. NAD(+)-binding residues include Arg-132, Glu-166, Lys-281, and Lys-305. Zn(2+) contacts are provided by Cys-398, Cys-401, Cys-416, and Cys-421. Residues Val-581–Glu-659 enclose the BRCT domain.

This sequence belongs to the NAD-dependent DNA ligase family. LigA subfamily. It depends on Mg(2+) as a cofactor. Mn(2+) serves as cofactor.

It catalyses the reaction NAD(+) + (deoxyribonucleotide)n-3'-hydroxyl + 5'-phospho-(deoxyribonucleotide)m = (deoxyribonucleotide)n+m + AMP + beta-nicotinamide D-nucleotide.. DNA ligase that catalyzes the formation of phosphodiester linkages between 5'-phosphoryl and 3'-hydroxyl groups in double-stranded DNA using NAD as a coenzyme and as the energy source for the reaction. It is essential for DNA replication and repair of damaged DNA. The sequence is that of DNA ligase from Acholeplasma laidlawii (strain PG-8A).